A 159-amino-acid polypeptide reads, in one-letter code: Small ribosomal subunit protein uS9 (159 aa).

This sequence belongs to the universal ribosomal protein uS9 family.

In Rickettsia rickettsii (strain Iowa), this protein is Small ribosomal subunit protein uS9.